Reading from the N-terminus, the 61-residue chain is Protein DDR2 (61 aa).

The signal sequence occupies residues 1-22 (MKVSQVFISAISVFGLATSVNA). N-linked (GlcNAc...) asparagine glycosylation is found at asparagine 24 and asparagine 27.

To yeast HOR7.

Its function is as follows. May play an important role in the response of cells to diverse environmental stresses. The chain is Protein DDR2 (DDR2) from Saccharomyces cerevisiae (strain ATCC 204508 / S288c) (Baker's yeast).